The primary structure comprises 335 residues: tRNA N6-adenosine threonylcarbamoyltransferase (335 aa).

Residues His109, His113, and Tyr130 each coordinate a divalent metal cation. Substrate-binding positions include 130-134 (YVSGG), Asp162, Gly177, Glu181, and Asn266. Asp294 serves as a coordination point for a divalent metal cation.

Belongs to the KAE1 / TsaD family. In terms of assembly, component of the EKC/KEOPS complex composed of at least tp53rk, tprkb, osgep and lage3; the whole complex dimerizes. Requires a divalent metal cation as cofactor.

The protein localises to the cytoplasm. It is found in the nucleus. It catalyses the reaction L-threonylcarbamoyladenylate + adenosine(37) in tRNA = N(6)-L-threonylcarbamoyladenosine(37) in tRNA + AMP + H(+). Its function is as follows. Component of the EKC/KEOPS complex that is required for the formation of a threonylcarbamoyl group on adenosine at position 37 (t(6)A37) in tRNAs that read codons beginning with adenine. The complex is probably involved in the transfer of the threonylcarbamoyl moiety of threonylcarbamoyl-AMP (TC-AMP) to the N6 group of A37. Osgep likely plays a direct catalytic role in this reaction, but requires other protein(s) of the complex to fulfill this activity. In Xenopus laevis (African clawed frog), this protein is tRNA N6-adenosine threonylcarbamoyltransferase.